Consider the following 432-residue polypeptide: Asparagine--tRNA ligase (432 aa).

Belongs to the class-II aminoacyl-tRNA synthetase family. As to quaternary structure, homodimer.

It is found in the cytoplasm. It catalyses the reaction tRNA(Asn) + L-asparagine + ATP = L-asparaginyl-tRNA(Asn) + AMP + diphosphate + H(+). In Lactobacillus gasseri (strain ATCC 33323 / DSM 20243 / BCRC 14619 / CIP 102991 / JCM 1131 / KCTC 3163 / NCIMB 11718 / NCTC 13722 / AM63), this protein is Asparagine--tRNA ligase.